The chain runs to 238 residues: MEDSFLESFGRLSLQQRQQQPPPRPPPARGPPPRRHSFRKHLYLLRGLPGSGKTTLARQLQHDYPRALIFSTDDFFFKEDGTYEFNPNLLEEAHEWNQRRARKAMRNGISPIIIDNTNLHAWEMKPYAVMALENNYEVIFREPDTRWKFNVQELARRNIHGVPKEKIQRMKERYEHNVTFHSVLHAEKPSRANRNQGRNSEPSSGSGYWNTYTELPNRRANGLYSNEGYRRGGHHQGY.

Disordered regions lie at residues 1–36 (MEDS…PRRH) and 183–212 (VLHA…WNTY). Residues 20-31 (QPPPRPPPARGP) show a composition bias toward pro residues. Over residues 192 to 212 (ANRNQGRNSEPSSGSGYWNTY) the composition is skewed to polar residues.

As to quaternary structure, interacts with dynactin subunit proteins, including DCTN4, DCTN5 and DCTN5.

In terms of biological role, might play a role in adipocyte differentiation and triglyceride accumulation. In Mus musculus (Mouse), this protein is NEDD4-binding protein 2-like 1 (N4bp2l1).